Reading from the N-terminus, the 353-residue chain is Anthranilate phosphoribosyltransferase (353 aa).

5-phospho-alpha-D-ribose 1-diphosphate contacts are provided by residues glycine 87, glycine 90–aspartate 91, threonine 95, asparagine 97–threonine 100, lysine 115–serine 123, and threonine 127. Anthranilate is bound at residue glycine 87. Residue serine 99 coordinates Mg(2+). Asparagine 118 provides a ligand contact to anthranilate. Residue arginine 173 coordinates anthranilate. Mg(2+) is bound by residues aspartate 231 and glutamate 232.

The protein belongs to the anthranilate phosphoribosyltransferase family. As to quaternary structure, homodimer. It depends on Mg(2+) as a cofactor.

It carries out the reaction N-(5-phospho-beta-D-ribosyl)anthranilate + diphosphate = 5-phospho-alpha-D-ribose 1-diphosphate + anthranilate. It functions in the pathway amino-acid biosynthesis; L-tryptophan biosynthesis; L-tryptophan from chorismate: step 2/5. Catalyzes the transfer of the phosphoribosyl group of 5-phosphorylribose-1-pyrophosphate (PRPP) to anthranilate to yield N-(5'-phosphoribosyl)-anthranilate (PRA). This chain is Anthranilate phosphoribosyltransferase, found in Salinispora arenicola (strain CNS-205).